The chain runs to 139 residues: Transcription antitermination protein NusB (139 aa).

Belongs to the NusB family.

In terms of biological role, involved in transcription antitermination. Required for transcription of ribosomal RNA (rRNA) genes. Binds specifically to the boxA antiterminator sequence of the ribosomal RNA (rrn) operons. This chain is Transcription antitermination protein NusB, found in Erwinia tasmaniensis (strain DSM 17950 / CFBP 7177 / CIP 109463 / NCPPB 4357 / Et1/99).